Here is a 389-residue protein sequence, read N- to C-terminus: S-adenosylmethionine synthase (389 aa).

His17 lines the ATP pocket. Residue Asp19 participates in Mg(2+) binding. Position 45 (Glu45) interacts with K(+). L-methionine-binding residues include Glu58 and Gln101. The flexible loop stretch occupies residues 101-111 (QSPDISQGVTE). Residues 168-170 (DSK), 234-235 (RF), Asp243, 249-250 (RK), Ala266, and Lys270 contribute to the ATP site. Asp243 serves as a coordination point for L-methionine. Lys274 is an L-methionine binding site.

This sequence belongs to the AdoMet synthase family. As to quaternary structure, homotetramer; dimer of dimers. The cofactor is Mg(2+). K(+) serves as cofactor.

It is found in the cytoplasm. The enzyme catalyses L-methionine + ATP + H2O = S-adenosyl-L-methionine + phosphate + diphosphate. Its pathway is amino-acid biosynthesis; S-adenosyl-L-methionine biosynthesis; S-adenosyl-L-methionine from L-methionine: step 1/1. Catalyzes the formation of S-adenosylmethionine (AdoMet) from methionine and ATP. The overall synthetic reaction is composed of two sequential steps, AdoMet formation and the subsequent tripolyphosphate hydrolysis which occurs prior to release of AdoMet from the enzyme. This chain is S-adenosylmethionine synthase, found in Geobacter sulfurreducens (strain ATCC 51573 / DSM 12127 / PCA).